Reading from the N-terminus, the 123-residue chain is Protein Wnt-7b (123 aa).

The O-palmitoleoyl serine; by PORCN moiety is linked to residue Ser-1. Residues 33 to 61 (VEAVRATRLRQPTFLKIKKPRTYRKPMVT) form a disordered linker region. Cysteines 89 and 104 form a disulfide. An N-linked (GlcNAc...) asparagine glycan is attached at Asn-90.

Belongs to the Wnt family. In terms of processing, palmitoleoylation is required for efficient binding to frizzled receptors. Depalmitoleoylation leads to Wnt signaling pathway inhibition.

It localises to the secreted. The protein resides in the extracellular space. Its subcellular location is the extracellular matrix. Its function is as follows. Ligand for members of the frizzled family of seven transmembrane receptors that functions in the canonical Wnt/beta-catenin signaling pathway. Required for normal fusion of the chorion and the allantois during placenta development. Required for central nervous system (CNS) angiogenesis and blood-brain barrier regulation. The chain is Protein Wnt-7b (WNT-7B) from Alopias vulpinus (Common thresher shark).